The following is a 427-amino-acid chain: MTADPGDRVRVTHGDASHEGVLVPSPSDDHLVVKLDSGYNVGVDTADADIDVLDADAVTVDGDTGEDAAGSTVEFDDDLPTIALISTGGTIASTVDYRTGAVTAQFDAEDVLRAVPDLAGRANYRGRVVANILSENMEPSIWQDLAAAVREEIEAGADGVVVMHGTDTMQFSASALSFMLETPVPVVFTGSQRSADRPSSDNVMNAVCAVEAAKSDVAEVMVCMHATESDDRCALHRGTRVRKTHTSRRDAFETVGATPLGYVDYDAASEAATADARGVTVEGAHAARGDATLDVASALEPAVELVKFTPGMNESLLAACEGSAGVVIEGTGLGHVHSDLTDTIGSLVDDGTTVVMTSQCLEGRVCDRVYDTGRDLLAAGVVEAGDTLPGTAKVKLMWALANADDPEAAMQESVAGALTTQSRPWTA.

The span at 1–18 (MTADPGDRVRVTHGDASH) shows a compositional bias: basic and acidic residues. Residues 1 to 20 (MTADPGDRVRVTHGDASHEG) form a disordered region. One can recognise an Asparaginase/glutaminase domain in the interval 80–413 (PTIALISTGG…DDPEAAMQES (334 aa)). Catalysis depends on residues T90, T166, D167, and K243.

The protein belongs to the asparaginase 1 family. GatD subfamily. Heterodimer of GatD and GatE.

The catalysed reaction is L-glutamyl-tRNA(Gln) + L-glutamine + ATP + H2O = L-glutaminyl-tRNA(Gln) + L-glutamate + ADP + phosphate + H(+). Functionally, allows the formation of correctly charged Gln-tRNA(Gln) through the transamidation of misacylated Glu-tRNA(Gln) in organisms which lack glutaminyl-tRNA synthetase. The reaction takes place in the presence of glutamine and ATP through an activated gamma-phospho-Glu-tRNA(Gln). The GatDE system is specific for glutamate and does not act on aspartate. In Halobacterium salinarum (strain ATCC 29341 / DSM 671 / R1), this protein is Glutamyl-tRNA(Gln) amidotransferase subunit D.